The sequence spans 834 residues: Ras GTPase-activating protein 3 (834 aa).

2 C2 domains span residues 1 to 112 (MAVE…DTWF) and 123 to 263 (VQGK…EAWY). N-acetylalanine is present on A2. Phosphotyrosine is present on Y66. At S77 the chain carries Phosphoserine. T110 carries the post-translational modification Phosphothreonine. The Ras-GAP domain occupies 346-561 (GRVVPFISAI…DAVKNFLDLI (216 aa)). The region spanning 576–677 (ILLKEGFMIK…WIDILTKVSQ (102 aa)) is the PH domain. Residues 679-715 (NQKRLTVFHPSAYLNGHWLCCRASSDTAAGCTPCTGG) form a Btk-type zinc finger. Zn(2+)-binding residues include H687, C698, C699, and C709. S809 and S833 each carry phosphoserine.

As to expression, high levels in brain, lower in spleen and lung.

In terms of biological role, inhibitory regulator of the Ras-cyclic AMP pathway. May bind inositol tetrakisphosphate (IP4). The polypeptide is Ras GTPase-activating protein 3 (Rasa3) (Mus musculus (Mouse)).